Here is a 286-residue protein sequence, read N- to C-terminus: 4-hydroxybenzoate octaprenyltransferase (286 aa).

The next 7 membrane-spanning stretches (helical) occupy residues G21–M40, I95–V115, F142–V162, W167–V187, Q210–A230, L235–F255, and F266–I286.

Belongs to the UbiA prenyltransferase family. Requires Mg(2+) as cofactor.

The protein resides in the cell inner membrane. The catalysed reaction is all-trans-octaprenyl diphosphate + 4-hydroxybenzoate = 4-hydroxy-3-(all-trans-octaprenyl)benzoate + diphosphate. It participates in cofactor biosynthesis; ubiquinone biosynthesis. Catalyzes the prenylation of para-hydroxybenzoate (PHB) with an all-trans polyprenyl group. Mediates the second step in the final reaction sequence of ubiquinone-8 (UQ-8) biosynthesis, which is the condensation of the polyisoprenoid side chain with PHB, generating the first membrane-bound Q intermediate 3-octaprenyl-4-hydroxybenzoate. The chain is 4-hydroxybenzoate octaprenyltransferase from Shewanella baltica (strain OS223).